Reading from the N-terminus, the 88-residue chain is Putative membrane protein insertion efficiency factor (88 aa).

This sequence belongs to the UPF0161 family.

It is found in the cell inner membrane. Its function is as follows. Could be involved in insertion of integral membrane proteins into the membrane. This chain is Putative membrane protein insertion efficiency factor, found in Coxiella burnetii (strain Dugway 5J108-111).